The chain runs to 356 residues: Chorismate synthase (356 aa).

Position 44 (R44) interacts with NADP(+). Residues H121–S123, G278, K293–S297, and R320 each bind FMN.

Belongs to the chorismate synthase family. Requires FMNH2 as cofactor.

The enzyme catalyses 5-O-(1-carboxyvinyl)-3-phosphoshikimate = chorismate + phosphate. The protein operates within metabolic intermediate biosynthesis; chorismate biosynthesis; chorismate from D-erythrose 4-phosphate and phosphoenolpyruvate: step 7/7. Catalyzes the anti-1,4-elimination of the C-3 phosphate and the C-6 proR hydrogen from 5-enolpyruvylshikimate-3-phosphate (EPSP) to yield chorismate, which is the branch point compound that serves as the starting substrate for the three terminal pathways of aromatic amino acid biosynthesis. This reaction introduces a second double bond into the aromatic ring system. The protein is Chorismate synthase of Pyrococcus abyssi (strain GE5 / Orsay).